The primary structure comprises 72 residues: Translation initiation factor IF-1 (72 aa).

The S1-like domain maps to 1 to 72; it reads MAKDDVIEIE…TKGRITYRFK (72 aa).

This sequence belongs to the IF-1 family. As to quaternary structure, component of the 30S ribosomal translation pre-initiation complex which assembles on the 30S ribosome in the order IF-2 and IF-3, IF-1 and N-formylmethionyl-tRNA(fMet); mRNA recruitment can occur at any time during PIC assembly.

It localises to the cytoplasm. In terms of biological role, one of the essential components for the initiation of protein synthesis. Stabilizes the binding of IF-2 and IF-3 on the 30S subunit to which N-formylmethionyl-tRNA(fMet) subsequently binds. Helps modulate mRNA selection, yielding the 30S pre-initiation complex (PIC). Upon addition of the 50S ribosomal subunit IF-1, IF-2 and IF-3 are released leaving the mature 70S translation initiation complex. This Latilactobacillus sakei subsp. sakei (strain 23K) (Lactobacillus sakei subsp. sakei) protein is Translation initiation factor IF-1.